The following is a 34-amino-acid chain: Aspartate aminotransferase 2 (34 aa).

Belongs to the class-I pyridoxal-phosphate-dependent aminotransferase family. In terms of assembly, homodimer. Pyridoxal 5'-phosphate is required as a cofactor.

It carries out the reaction L-aspartate + 2-oxoglutarate = oxaloacetate + L-glutamate. In terms of biological role, important for the metabolism of amino acids and Krebs-cycle related organic acids. In plants, it is involved in nitrogen metabolism and in aspects of carbon and energy metabolism. This Pseudotsuga menziesii (Douglas-fir) protein is Aspartate aminotransferase 2.